We begin with the raw amino-acid sequence, 461 residues long: Elongation factor 1-alpha (461 aa).

Residue Gly-2 is modified to N,N,N-trimethylglycine. The tr-type G domain occupies 5-242 (KIHINIVVIG…DAILPPSRPT (238 aa)). Positions 14–21 (GHVDSGKS) are G1. 14–21 (GHVDSGKS) provides a ligand contact to GTP. The interval 70-74 (GITID) is G2. Positions 91-94 (DAPG) are G3. Residues 153–156 (NKMD) and 194–196 (SGW) each bind GTP. Residues 153 to 156 (NKMD) are G4. The tract at residues 194 to 196 (SGW) is G5. Residues Glu-301 and Glu-374 each carry the 5-glutamyl glycerylphosphorylethanolamine modification.

This sequence belongs to the TRAFAC class translation factor GTPase superfamily. Classic translation factor GTPase family. EF-Tu/EF-1A subfamily.

It is found in the cytoplasm. The enzyme catalyses GTP + H2O = GDP + phosphate + H(+). Translation elongation factor that catalyzes the GTP-dependent binding of aminoacyl-tRNA (aa-tRNA) to the A-site of ribosomes during the elongation phase of protein synthesis. Base pairing between the mRNA codon and the aa-tRNA anticodon promotes GTP hydrolysis, releasing the aa-tRNA from EEF1A1 and allowing its accommodation into the ribosome. The growing protein chain is subsequently transferred from the P-site peptidyl tRNA to the A-site aa-tRNA, extending it by one amino acid through ribosome-catalyzed peptide bond formation. In Oryzias latipes (Japanese rice fish), this protein is Elongation factor 1-alpha (eef1a).